The sequence spans 837 residues: Translation initiation factor IF-2 (837 aa).

The disordered stretch occupies residues 94 to 253 (KRSPDEIEAE…QHGFQNPTGP (160 aa)). Over residues 95–148 (RSPDEIEAERQRELEEQRAAEEAERLKAEEAAARQRAEEEARKAEEAARAKAAE) the composition is skewed to basic and acidic residues. Residues 149–171 (EAVSAQPAAAVEVAAAEPVAKPA) show a composition bias toward low complexity. Composition is skewed to basic and acidic residues over residues 172–188 (AAEE…PKRD) and 220–229 (STDEESDGYR). Over residues 230 to 244 (RGGRGGKSKLKKRNQ) the composition is skewed to basic residues. Residues 337–506 (TRAPVVTVMG…LLQAEVLELK (170 aa)) form the tr-type G domain. A G1 region spans residues 346–353 (GHVDHGKT). 346–353 (GHVDHGKT) is a binding site for GTP. Residues 371 to 375 (GITQH) form a G2 region. Residues 392 to 395 (DTPG) form a G3 region. Residues 392–396 (DTPGH) and 446–449 (NKID) each bind GTP. The G4 stretch occupies residues 446–449 (NKID). Residues 482–484 (SAK) form a G5 region.

Belongs to the TRAFAC class translation factor GTPase superfamily. Classic translation factor GTPase family. IF-2 subfamily.

Its subcellular location is the cytoplasm. In terms of biological role, one of the essential components for the initiation of protein synthesis. Protects formylmethionyl-tRNA from spontaneous hydrolysis and promotes its binding to the 30S ribosomal subunits. Also involved in the hydrolysis of GTP during the formation of the 70S ribosomal complex. This is Translation initiation factor IF-2 from Pseudomonas paraeruginosa (strain DSM 24068 / PA7) (Pseudomonas aeruginosa (strain PA7)).